Here is a 146-residue protein sequence, read N- to C-terminus: Angiogenin (146 aa).

The N-terminal stretch at 1 to 24 is a signal peptide; it reads MVMGLGLFLLVFMLGLGLTPPTLA. Gln25 carries the pyrrolidone carboxylic acid modification. Residue His37 is the Proton acceptor of the active site. Position 45 (Arg45) interacts with tRNA. 3 disulfides stabilise this stretch: Cys50-Cys105, Cys63-Cys116, and Cys81-Cys131. The Nucleolar localization signal signature appears at 55-59; it reads RRRGL. TRNA contacts are provided by Cys105 and Ile127. The Proton donor role is filled by His138.

Belongs to the pancreatic ribonuclease family. In terms of assembly, homodimer. Interacts with RNH1; inhibiting ANG ribonuclease activity. Interacts with PCNA.

Its subcellular location is the secreted. It localises to the nucleus. It is found in the nucleolus. The protein localises to the cytoplasm. The protein resides in the stress granule. Has weak tRNA ribonuclease activity by itself due to partial autoinhibition by its C-terminus, which folds into a short alpha-helix that partially occludes the substrate-binding site. In absence of stress, the ribonuclease activity is inhibited by RNH1 in the cytoplasm. In response to stress, dissociates from RNH1 in the cytoplasm and associates with cytoplasmic ribosomes with vacant A-sites: ribosomes directly activate the tRNA ribonuclease activity of ANG by refolding the C-terminal alpha-helix. In response to stress, the angiogenic activity of ANG is inhibited by RNH1 in the nucleus. In terms of biological role, secreted ribonuclease that can either promote or restrict cell proliferation of target cells, depending on the context. Endocytosed in target cells via its receptor PLXNB2 and translocates to the cytoplasm or nucleus. Under stress conditions, localizes to the cytoplasm and promotes the assembly of stress granules (SGs): specifically cleaves a subset of tRNAs within anticodon loops to produce tRNA-derived stress-induced fragments (tiRNAs), resulting in translation repression and inhibition of cell proliferation. tiRNas also prevent formation of apoptosome, thereby promoting cell survival. Preferentially cleaves RNAs between a pyrimidine and an adenosine residue, suggesting that it cleaves the anticodon loop of tRNA(Ala) (32-UUAGCAU-38) after positions 33 and 36. Cleaves a subset of tRNAs, including tRNA(Ala), tRNA(Glu), tRNA(Gly), tRNA(Lys), tRNA(Val), tRNA(His), tRNA(Asp) and tRNA(Sec). Under growth conditions and in differentiated cells, translocates to the nucleus and stimulates ribosomal RNA (rRNA) transcription, including that containing the initiation site sequences of 45S rRNA, thereby promoting cell growth and proliferation. Angiogenin induces vascularization of normal and malignant tissues via its ability to promote rRNA transcription. Involved in hematopoietic stem and progenitor cell (HSPC) growth and survival by promoting rRNA transcription in growth conditions and inhibiting translation in response to stress, respectively. Mediates the crosstalk between myeloid and intestinal epithelial cells to protect the intestinal epithelial barrier integrity: secreted by myeloid cells and promotes intestinal epithelial cells proliferation and survival. Also mediates osteoclast-endothelial cell crosstalk in growing bone: produced by osteoclasts and protects the neighboring vascular cells against senescence by promoting rRNA transcription. This Trachypithecus francoisi (Francois' leaf monkey) protein is Angiogenin (ANG).